Consider the following 199-residue polypeptide: Translation machinery-associated protein 22 (199 aa).

Residues 97 to 168 enclose the SUI1 domain; it reads VVIRREARTK…EVEAYIHALL (72 aa).

It belongs to the DENR family. As to quaternary structure, interacts with the 40S ribosomal subunit.

It localises to the cytoplasm. In Eremothecium gossypii (strain ATCC 10895 / CBS 109.51 / FGSC 9923 / NRRL Y-1056) (Yeast), this protein is Translation machinery-associated protein 22 (TMA22).